Here is a 168-residue protein sequence, read N- to C-terminus: Endoribonuclease YbeY (168 aa).

3 residues coordinate Zn(2+): histidine 119, histidine 123, and histidine 129.

The protein belongs to the endoribonuclease YbeY family. The cofactor is Zn(2+).

Its subcellular location is the cytoplasm. Single strand-specific metallo-endoribonuclease involved in late-stage 70S ribosome quality control and in maturation of the 3' terminus of the 16S rRNA. The protein is Endoribonuclease YbeY of Gluconobacter oxydans (strain 621H) (Gluconobacter suboxydans).